A 220-amino-acid chain; its full sequence is Guanylate kinase (220 aa).

The Guanylate kinase-like domain maps to 15–194 (GLMLVISSPS…ALDAVQSIVK (180 aa)). Residue 22–29 (SPSGAGKS) participates in ATP binding.

It belongs to the guanylate kinase family.

It localises to the cytoplasm. The enzyme catalyses GMP + ATP = GDP + ADP. Its function is as follows. Essential for recycling GMP and indirectly, cGMP. The polypeptide is Guanylate kinase (Rhizobium johnstonii (strain DSM 114642 / LMG 32736 / 3841) (Rhizobium leguminosarum bv. viciae)).